A 245-amino-acid chain; its full sequence is Phosducin (245 aa).

The tract at residues 1-67 (MEEARRQSLE…SRDDKDSKER (67 aa)) is disordered. Positions 1–241 (MEEARRQSLE…IHALEQTSME (241 aa)) constitute a Phosducin domain. Basic and acidic residues predominate over residues 58–67 (SRDDKDSKER). At Ser-73 the chain carries Phosphoserine; by PKA. The tract at residues 111–245 (YGFVYELETG…EQTSMEEDVE (135 aa)) is thioredoxin fold.

This sequence belongs to the phosducin family. In terms of assembly, forms a complex with the beta and gamma subunits of the GTP-binding protein, transducin. Interacts with CRX. Light-induced changes in cyclic nucleotide levels modulate the phosphorylation of this protein by cAMP kinase.

The protein resides in the cytoplasm. Its subcellular location is the cytosol. The protein localises to the nucleus. It is found in the cell projection. It localises to the cilium. The protein resides in the photoreceptor outer segment. Its subcellular location is the photoreceptor inner segment. Functionally, may participate in the regulation of visual phototransduction or in the integration of photoreceptor metabolism. Inhibits the transcriptional activation activity of the cone-rod homeobox CRX. The protein is Phosducin (PDC) of Equus caballus (Horse).